Consider the following 310-residue polypeptide: Olfactory receptor 2A12 (310 aa).

The Extracellular segment spans residues 1-24; it reads MESNQTWITEVILLGFQVDPALEL. N-linked (GlcNAc...) asparagine glycosylation occurs at asparagine 4. Residues 25 to 48 form a helical membrane-spanning segment; it reads FLFGFFLLFYSLTLMGNGIILGLI. Residues 49–56 are Cytoplasmic-facing; it reads YLDSRLHT. Residues 57–78 form a helical membrane-spanning segment; it reads PMYVFLSHLAIVDMSYASSTVP. Topologically, residues 79–99 are extracellular; that stretch reads KMLANLVMHKKVISFAPCILQ. An intrachain disulfide couples cysteine 96 to cysteine 188. Residues 100-119 form a helical membrane-spanning segment; that stretch reads TFLYLAFAITECLILVMMCY. Over 120-138 the chain is Cytoplasmic; the sequence is DRYVAICHPLQYTLIMNWR. A helical transmembrane segment spans residues 139 to 157; it reads VCTVLASTCWIFSFLLALV. The Extracellular segment spans residues 158–194; sequence HITLILRLPFCGPQKINHFFCQIMSVFKLACADTRLN. Residues 195-218 form a helical membrane-spanning segment; that stretch reads QVVLFAGSAFILVGPLCLVLVSYL. Over 219–235 the chain is Cytoplasmic; sequence HILVAILRIQSGEGRRK. A helical transmembrane segment spans residues 236–258; it reads AFSTCSSHLCVVGLFFGSAIVMY. The Extracellular segment spans residues 259 to 271; that stretch reads MAPKSSHSQERRK. A helical transmembrane segment spans residues 272–291; the sequence is ILSLFYSLFNPILNPLIYSL. At 292–310 the chain is on the cytoplasmic side; the sequence is RNAEVKGALKRVLWKQRSM.

This sequence belongs to the G-protein coupled receptor 1 family.

The protein resides in the cell membrane. In terms of biological role, odorant receptor. This Homo sapiens (Human) protein is Olfactory receptor 2A12 (OR2A12).